A 110-amino-acid polypeptide reads, in one-letter code: Large ribosomal subunit protein bL20 (110 aa).

It belongs to the bacterial ribosomal protein bL20 family.

Binds directly to 23S ribosomal RNA and is necessary for the in vitro assembly process of the 50S ribosomal subunit. It is not involved in the protein synthesizing functions of that subunit. In Shigella boydii serotype 4 (strain Sb227), this protein is Large ribosomal subunit protein bL20.